Consider the following 775-residue polypeptide: Dipeptidyl peptidase 4 (775 aa).

Residues 1 to 15 form the signal peptide; it reads MKFLSLLLLAGIAQA. N-linked (GlcNAc...) asparagine glycans are attached at residues N81, N111, N170, and N219. Active-site charge relay system residues include S613, D690, and H725.

The protein belongs to the peptidase S9B family.

It localises to the secreted. The catalysed reaction is Release of an N-terminal dipeptide, Xaa-Yaa-|-Zaa-, from a polypeptide, preferentially when Yaa is Pro, provided Zaa is neither Pro nor hydroxyproline.. Its function is as follows. Extracellular dipeptidyl-peptidase which removes N-terminal dipeptides sequentially from polypeptides having unsubstituted N-termini provided that the penultimate residue is proline. Contributes to pathogenicity. The chain is Dipeptidyl peptidase 4 (DPP4) from Trichophyton equinum (Horse ringworm fungus).